The following is a 314-amino-acid chain: Bifunctional pinoresinol-lariciresinol reductase (314 aa).

NADP(+) is bound by residues 10-16 (GGTGYIG), arginine 35, and lysine 44. Lysine 138 functions as the Proton acceptor in the catalytic mechanism. Arginine 142 contributes to the NADP(+) binding site. Histidine 270 is a substrate binding site.

Belongs to the NmrA-type oxidoreductase family. Isoflavone reductase subfamily. Dimer.

The catalysed reaction is (+)-lariciresinol + NADP(+) = (+)-pinoresinol + NADPH + H(+). It carries out the reaction (+)-secoisolariciresinol + NADP(+) = (-)-lariciresinol + NADPH + H(+). In terms of biological role, reductase involved in the lignan justicidin B biosynthesis. Catalyzes the enantioselective conversion of (+)-pinoresinol into (+)-lariciresinol and of (-)-lariciresinol into (+)-secoisolariciresinol. Low activity with the other enantiomers. Abstracts the 4R-hydride from the NADPH cofactor during catalysis. The polypeptide is Bifunctional pinoresinol-lariciresinol reductase (PLR_Lp1) (Linum perenne (Perennial flax)).